The chain runs to 499 residues: Trichoplein keratin filament-binding protein (499 aa).

The stretch at 12-38 (SRVRTLEQQLVRQREQEARLRRQWEQH) forms a coiled coil. 2 disordered regions span residues 46 to 78 (DVRS…EEKQ) and 169 to 209 (VQQQ…EEEN). A compositionally biased stretch (polar residues) spans 50-67 (SKQAQWSSRQSFHRSMSA). 2 stretches are compositionally biased toward basic and acidic residues: residues 69 to 78 (QRDRMREEKQ) and 172 to 209 (QEKK…EEEN). Coiled-coil stretches lie at residues 71 to 133 (DRMR…ERRK), 168 to 306 (QVQQ…ALLE), and 359 to 484 (WEKR…MIRQ). Residues 74–499 (REEKQRKLEE…IHSRPRSAWT (426 aa)) are interaction with keratin proteins. A trichohyalin/plectin homology domain region spans residues 260–426 (KMMEESRRKT…RLTLRLEKEQ (167 aa)).

It belongs to the TCHP family.

It localises to the cytoplasm. The protein localises to the cytoskeleton. It is found in the microtubule organizing center. Its subcellular location is the centrosome. In terms of biological role, may act as a 'capping' or 'branching' protein for keratin filaments in the cell periphery. May regulate K8/K18 filament and desmosome organization mainly at the apical or peripheral regions of simple epithelial cells. The chain is Trichoplein keratin filament-binding protein from Danio rerio (Zebrafish).